We begin with the raw amino-acid sequence, 514 residues long: Prolyl 3,4-dihydroxylase OGFOD1 (514 aa).

Residues 114–221 enclose the Fe2OG dioxygenase domain; that stretch reads GAVDCSCNIY…RVSISGWFHT (108 aa). Residues histidine 132 and aspartate 134 each contribute to the Fe cation site. Tyrosine 146 contributes to the 2-oxoglutarate binding site. Histidine 200 contributes to the Fe cation binding site. A 2-oxoglutarate-binding site is contributed by arginine 212.

It belongs to the TPA1 family. As to quaternary structure, monomer and homodimer. It depends on Fe(2+) as a cofactor. The cofactor is L-ascorbate.

It carries out the reaction [ribosomal protein uS12]-L-proline + 2-oxoglutarate + O2 = [ribosomal protein uS12]-(3S)-3-hydroxy-L-proline + succinate + CO2. The enzyme catalyses [ribosomal protein uS12]-(3S)-3-hydroxy-L-proline + 2-oxoglutarate + O2 = [ribosomal protein uS12]-(3S)-3,4-dihydroxy-L-proline + succinate + CO2. Its function is as follows. Prolyl 3,4-dihydroxylase that catalyzes 3,4-dihydroxylation of 'Pro-61' of small ribosomal subunit uS12 (RPS23), thereby regulating protein translation termination efficiency. The chain is Prolyl 3,4-dihydroxylase OGFOD1 (Ogd) from Ostreococcus tauri.